The chain runs to 269 residues: Indole-3-glycerol phosphate synthase (269 aa).

It belongs to the TrpC family.

The catalysed reaction is 1-(2-carboxyphenylamino)-1-deoxy-D-ribulose 5-phosphate + H(+) = (1S,2R)-1-C-(indol-3-yl)glycerol 3-phosphate + CO2 + H2O. Its pathway is amino-acid biosynthesis; L-tryptophan biosynthesis; L-tryptophan from chorismate: step 4/5. This chain is Indole-3-glycerol phosphate synthase, found in Rhodococcus jostii (strain RHA1).